Consider the following 326-residue polypeptide: Olfactory receptor 11H1 (326 aa).

The Extracellular segment spans residues Met1–Ser44. Asn13 and Asn18 each carry an N-linked (GlcNAc...) asparagine glycan. Residues Leu45–Trp65 form a helical membrane-spanning segment. Topologically, residues Cys66 to Thr72 are cytoplasmic. A helical transmembrane segment spans residues Pro73–Val93. At Pro94–Cys112 the chain is on the extracellular side. Asn106 carries an N-linked (GlcNAc...) asparagine glycan. Residues Cys112 and Cys194 are joined by a disulfide bond. The helical transmembrane segment at Phe113–Met133 threads the bilayer. Over Ala134–Lys158 the chain is Cytoplasmic. Residues Leu159 to Ser179 form a helical membrane-spanning segment. At Gln180–Thr216 the chain is on the extracellular side. A helical membrane pass occupies residues Leu217–Leu237. Topologically, residues Lys238–His259 are cytoplasmic. A helical membrane pass occupies residues Leu260 to Gly280. Over His281 to Lys287 the chain is Extracellular. Residues Ile288 to Gln308 traverse the membrane as a helical segment. The Cytoplasmic segment spans residues Asn309–Ile326.

Belongs to the G-protein coupled receptor 1 family.

It is found in the cell membrane. In terms of biological role, odorant receptor. This chain is Olfactory receptor 11H1 (OR11H1), found in Homo sapiens (Human).